The sequence spans 156 residues: uncharacterized protein (156 aa).

Pro residues predominate over residues 1–12 (MSARPSLPPLPA). Disordered regions lie at residues 1–89 (MSAR…PPPA) and 129–156 (PLSP…TMRD). The segment covering 49 to 67 (ARAEEAGGEEGKREAEAWT) has biased composition (basic and acidic residues).

This is an uncharacterized protein from Homo sapiens (Human).